The following is an 841-amino-acid chain: Outer membrane usher protein MyfC (841 aa).

Positions 1–26 (MFFSLKNSVAKLIAFWAICLVLPVWA) are cleaved as a signal peptide. Cys817 and Cys840 are joined by a disulfide.

The protein belongs to the fimbrial export usher family.

It localises to the cell outer membrane. Involved in the export and assembly of the MyfA fimbrial subunit. This chain is Outer membrane usher protein MyfC (myfC), found in Yersinia enterocolitica.